The chain runs to 1337 residues: ABC transporter D family member 1 (1337 aa).

The next 4 membrane-spanning stretches (helical) occupy residues 24-44 (ILLA…KSRV), 142-162 (APLF…LSTL), 247-267 (YASP…GTAI), and 342-362 (FLLK…PFFS). The ABC transmembrane type-1 1 domain maps to 117-395 (VFRTALSNRL…SVIISLFQAL (279 aa)). One can recognise an ABC transporter 1 domain in the interval 448-695 (VEFSDVKVVT…DAMVVQRAFA (248 aa)). ATP is bound at residue 481 to 488 (GPNGSGKS). Residues 751 to 1049 (LIPTIFDKQG…VVSQSFMAFG (299 aa)) form the ABC transmembrane type-1 2 domain. Residues 900–920 (LLTGQRGVAILYTYMLLGLGF) traverse the membrane as a helical segment. Positions 1091–1337 (LDSQDLLSFS…ELRSIEQTTE (247 aa)) constitute an ABC transporter 2 domain. 1130-1137 (GPNGSGKT) contributes to the ATP binding site.

It belongs to the ABC transporter superfamily. ABCD family. Peroxisomal fatty acyl CoA transporter (TC 3.A.1.203) subfamily.

The protein resides in the peroxisome membrane. The protein localises to the glyoxysome membrane. It carries out the reaction an acyl-CoA(out) + ATP + H2O = an acyl-CoA(in) + ADP + phosphate + H(+). Functionally, contributes to the transport of fatty acids and their derivatives (acyl CoAs) across the peroxisomal membrane. Provides acetate to the glyoxylate cycle in developing seedlings. Involved in pollen tube elongation, ovule fertilization, and seeds germination after imbibition (controls the switch between the opposing developmental programs of dormancy and germination), probably by promoting beta-oxidation of storage lipids during gluconeogenesis. Required for biosynthesis of jasmonic acid and conversion of indole butyric acid to indole acetic acid. Confers sensitivity to monofluoroacetic acid (FAc), a toxic acetate analog, and to 2,4-dichlorophenoxybutyric acid (2,4-DB) and indole-3-butyric acid (IBA), two precursors of auxin after beta-oxidation. This is ABC transporter D family member 1 from Arabidopsis thaliana (Mouse-ear cress).